A 564-amino-acid chain; its full sequence is Kelch repeat and BTB domain-containing protein 1 (564 aa).

One can recognise a BTB domain in the interval 21–88; it reads CDINIVINDE…IYGIPLSLTN (68 aa). The 97-residue stretch at 123 to 219 folds into the BACK domain; it reads CIDFYIYADK…SLLSPQVIKS (97 aa). Kelch repeat units follow at residues 252 to 297, 298 to 346, 347 to 395, 397 to 441, 442 to 492, and 494 to 539; these read IELI…VLDN, IIYM…ADDE, YIYC…MLNG, IYVI…VHDG, KIYI…SAHN, and LYVG…CEPI.

Interacts (via BTB domain) with host CUL3.

It localises to the host cytoplasm. Probable substrate-specific adapter of CUL3-containing E3 ubiquitin-protein ligases which mediate the ubiquitination and subsequent proteasomal degradation of host target proteins. The protein is Kelch repeat and BTB domain-containing protein 1 (KBTB1) of Cowpox virus (strain GRI-90 / Grishak) (CPV).